Here is a 613-residue protein sequence, read N- to C-terminus: Dihydroxy-acid dehydratase (613 aa).

Position 81 (D81) interacts with Mg(2+). C122 provides a ligand contact to [2Fe-2S] cluster. Residues D123 and K124 each coordinate Mg(2+). K124 is subject to N6-carboxylysine. Residue C193 coordinates [2Fe-2S] cluster. E489 contributes to the Mg(2+) binding site. The Proton acceptor role is filled by S515.

It belongs to the IlvD/Edd family. In terms of assembly, homodimer. The cofactor is [2Fe-2S] cluster. Requires Mg(2+) as cofactor.

It carries out the reaction (2R)-2,3-dihydroxy-3-methylbutanoate = 3-methyl-2-oxobutanoate + H2O. It catalyses the reaction (2R,3R)-2,3-dihydroxy-3-methylpentanoate = (S)-3-methyl-2-oxopentanoate + H2O. The protein operates within amino-acid biosynthesis; L-isoleucine biosynthesis; L-isoleucine from 2-oxobutanoate: step 3/4. It functions in the pathway amino-acid biosynthesis; L-valine biosynthesis; L-valine from pyruvate: step 3/4. In terms of biological role, functions in the biosynthesis of branched-chain amino acids. Catalyzes the dehydration of (2R,3R)-2,3-dihydroxy-3-methylpentanoate (2,3-dihydroxy-3-methylvalerate) into 2-oxo-3-methylpentanoate (2-oxo-3-methylvalerate) and of (2R)-2,3-dihydroxy-3-methylbutanoate (2,3-dihydroxyisovalerate) into 2-oxo-3-methylbutanoate (2-oxoisovalerate), the penultimate precursor to L-isoleucine and L-valine, respectively. The sequence is that of Dihydroxy-acid dehydratase from Pseudomonas putida (strain ATCC 700007 / DSM 6899 / JCM 31910 / BCRC 17059 / LMG 24140 / F1).